Here is a 466-residue protein sequence, read N- to C-terminus: Ribulose bisphosphate carboxylase large chain (466 aa).

Position 5 is an N6,N6,N6-trimethyllysine (K5). Substrate is bound by residues N114 and T164. Residue K166 is the Proton acceptor of the active site. K168 is a binding site for substrate. Mg(2+) contacts are provided by K192, D194, and E195. Position 192 is an N6-carboxylysine (K192). The Proton acceptor role is filled by H285. 3 residues coordinate substrate: R286, H318, and S370.

This sequence belongs to the RuBisCO large chain family. Type I subfamily. Heterohexadecamer of 8 large chains and 8 small chains; disulfide-linked. The disulfide link is formed within the large subunit homodimers. Mg(2+) serves as cofactor. Post-translationally, the disulfide bond which can form in the large chain dimeric partners within the hexadecamer appears to be associated with oxidative stress and protein turnover.

The protein resides in the plastid. Its subcellular location is the chloroplast. The catalysed reaction is 2 (2R)-3-phosphoglycerate + 2 H(+) = D-ribulose 1,5-bisphosphate + CO2 + H2O. The enzyme catalyses D-ribulose 1,5-bisphosphate + O2 = 2-phosphoglycolate + (2R)-3-phosphoglycerate + 2 H(+). Functionally, ruBisCO catalyzes two reactions: the carboxylation of D-ribulose 1,5-bisphosphate, the primary event in carbon dioxide fixation, as well as the oxidative fragmentation of the pentose substrate in the photorespiration process. Both reactions occur simultaneously and in competition at the same active site. In Caltha palustris (Yellow marsh marigold), this protein is Ribulose bisphosphate carboxylase large chain.